The sequence spans 485 residues: Glutamate--tRNA ligase 1 (485 aa).

Positions 10–20 (PSPTGAIHIGN) match the 'HIGH' region motif. The 'KMSKS' region signature appears at 252–256 (KLSKR). An ATP-binding site is contributed by K255.

Belongs to the class-I aminoacyl-tRNA synthetase family. Glutamate--tRNA ligase type 1 subfamily. Monomer.

The protein localises to the cytoplasm. The enzyme catalyses tRNA(Glu) + L-glutamate + ATP = L-glutamyl-tRNA(Glu) + AMP + diphosphate. In terms of biological role, catalyzes the attachment of glutamate to tRNA(Glu) in a two-step reaction: glutamate is first activated by ATP to form Glu-AMP and then transferred to the acceptor end of tRNA(Glu). This Thermoanaerobacter pseudethanolicus (strain ATCC 33223 / 39E) (Clostridium thermohydrosulfuricum) protein is Glutamate--tRNA ligase 1.